Consider the following 241-residue polypeptide: MNIFPAIDLINGKCVRLEKGDFNKTTTYELEPKDVAKAYQQAGAEFIHVVDLDGAKKGQTCQFETIQKIRENCNMTLQVGGGVKDFETIEKLLEIGVDRVVIGSLAVKDIALTKKFFEKYGAEKIVLALDVFIKNGVPYIATHGWQESSTTTLDEILQTYLGDGLEYVLCTDISRDGMLQGPNFELYRIYSSIYPDVQFMASGGVGSLEDLEILKEQNTYGVIIGKALYENKFTLQEALEC.

Residue Asp8 is the Proton acceptor of the active site. Asp130 serves as the catalytic Proton donor.

The protein belongs to the HisA/HisF family.

Its subcellular location is the cytoplasm. It catalyses the reaction 1-(5-phospho-beta-D-ribosyl)-5-[(5-phospho-beta-D-ribosylamino)methylideneamino]imidazole-4-carboxamide = 5-[(5-phospho-1-deoxy-D-ribulos-1-ylimino)methylamino]-1-(5-phospho-beta-D-ribosyl)imidazole-4-carboxamide. It functions in the pathway amino-acid biosynthesis; L-histidine biosynthesis; L-histidine from 5-phospho-alpha-D-ribose 1-diphosphate: step 4/9. This Francisella philomiragia subsp. philomiragia (strain ATCC 25017 / CCUG 19701 / FSC 153 / O#319-036) protein is 1-(5-phosphoribosyl)-5-[(5-phosphoribosylamino)methylideneamino] imidazole-4-carboxamide isomerase.